Here is a 305-residue protein sequence, read N- to C-terminus: Dermonecrotic toxin LiSicTox-alphaII1 (305 aa).

Positions 1 to 18 are cleaved as a signal peptide; the sequence is MLLHIALILGCWSVFSEG. Residues 19–26 constitute a propeptide that is removed on maturation; that stretch reads AETDVAER. His38 is an active-site residue. Positions 58 and 60 each coordinate Mg(2+). His74 (nucleophile) is an active-site residue. 2 cysteine pairs are disulfide-bonded: Cys78–Cys84 and Cys80–Cys223. Asp118 contributes to the Mg(2+) binding site.

The protein belongs to the arthropod phospholipase D family. Class II subfamily. Class IIa sub-subfamily. Mg(2+) serves as cofactor. As to expression, expressed by the venom gland.

It localises to the secreted. It catalyses the reaction an N-(acyl)-sphingosylphosphocholine = an N-(acyl)-sphingosyl-1,3-cyclic phosphate + choline. The enzyme catalyses an N-(acyl)-sphingosylphosphoethanolamine = an N-(acyl)-sphingosyl-1,3-cyclic phosphate + ethanolamine. It carries out the reaction a 1-acyl-sn-glycero-3-phosphocholine = a 1-acyl-sn-glycero-2,3-cyclic phosphate + choline. The catalysed reaction is a 1-acyl-sn-glycero-3-phosphoethanolamine = a 1-acyl-sn-glycero-2,3-cyclic phosphate + ethanolamine. In terms of biological role, dermonecrotic toxins cleave the phosphodiester linkage between the phosphate and headgroup of certain phospholipids (sphingolipid and lysolipid substrates), forming an alcohol (often choline) and a cyclic phosphate. This toxin acts on sphingomyelin (SM) wih high activity. It may also act on ceramide phosphoethanolamine (CPE), lysophosphatidylcholine (LPC) and lysophosphatidylethanolamine (LPE), but not on lysophosphatidylserine (LPS), and lysophosphatidylglycerol (LPG). It acts by transphosphatidylation, releasing exclusively cyclic phosphate products as second products. Shows high hemolytic activity. Causes dermonecrosis, induces inflammatory response, platelet aggregation and increases vessel permeability. Shows no lethality when injected at higher dose into mice. May cause complement-dependent hemolysis as well as in a complement-independent manner. The hemolysis provoked in a complement-independent manner may be composed of several steps. The toxin may bind to erythrocyte membranes, may hydrolyze membrane phospholipids (SM and LPC) thus generating metabolism products that may cause hemolysis, probably by provoking an increase of calcium inside cells. The calcium influx may be due to the opening of L-type calcium channels, since L-type calcium channel blockers inhibit calcium influx. In Loxosceles intermedia (Brown spider), this protein is Dermonecrotic toxin LiSicTox-alphaII1.